We begin with the raw amino-acid sequence, 276 residues long: Phosphate import ATP-binding protein PstB (276 aa).

The 249-residue stretch at V23–I271 folds into the ABC transporter domain. G62–S69 lines the ATP pocket.

The protein belongs to the ABC transporter superfamily. Phosphate importer (TC 3.A.1.7) family. In terms of assembly, the complex is composed of two ATP-binding proteins (PstB), two transmembrane proteins (PstC and PstA) and a solute-binding protein (PstS).

The protein resides in the cell membrane. It carries out the reaction phosphate(out) + ATP + H2O = ADP + 2 phosphate(in) + H(+). In terms of biological role, part of the ABC transporter complex PstSACB involved in phosphate import. Responsible for energy coupling to the transport system. This Oceanobacillus iheyensis (strain DSM 14371 / CIP 107618 / JCM 11309 / KCTC 3954 / HTE831) protein is Phosphate import ATP-binding protein PstB.